Reading from the N-terminus, the 216-residue chain is Thymidine kinase (216 aa).

ATP contacts are provided by residues 9 to 16 and 86 to 89; these read GPMDSGKS and DEAQ. Glu-87 acts as the Proton acceptor in catalysis.

This sequence belongs to the thymidine kinase family. As to quaternary structure, homotetramer.

It localises to the cytoplasm. The catalysed reaction is thymidine + ATP = dTMP + ADP + H(+). The polypeptide is Thymidine kinase (Cutibacterium acnes (strain DSM 16379 / KPA171202) (Propionibacterium acnes)).